Consider the following 464-residue polypeptide: tRNA(Ile2) 2-agmatinylcytidine synthetase TiaS (464 aa).

This sequence belongs to the TiaS family.

It is found in the cytoplasm. It catalyses the reaction cytidine(34) in tRNA(Ile2) + agmatine + ATP + H2O = 2-agmatinylcytidine(34) in tRNA(Ile2) + AMP + 2 phosphate + 2 H(+). Its function is as follows. ATP-dependent agmatine transferase that catalyzes the formation of 2-agmatinylcytidine (agm2C) at the wobble position (C34) of tRNA(Ile2), converting the codon specificity from AUG to AUA. The chain is tRNA(Ile2) 2-agmatinylcytidine synthetase TiaS from Ignisphaera aggregans (strain DSM 17230 / JCM 13409 / AQ1.S1).